A 555-amino-acid polypeptide reads, in one-letter code: Formate--tetrahydrofolate ligase (555 aa).

Residue T65–T72 participates in ATP binding.

The protein belongs to the formate--tetrahydrofolate ligase family.

It catalyses the reaction (6S)-5,6,7,8-tetrahydrofolate + formate + ATP = (6R)-10-formyltetrahydrofolate + ADP + phosphate. Its pathway is one-carbon metabolism; tetrahydrofolate interconversion. This Caldanaerobacter subterraneus subsp. tengcongensis (strain DSM 15242 / JCM 11007 / NBRC 100824 / MB4) (Thermoanaerobacter tengcongensis) protein is Formate--tetrahydrofolate ligase.